A 431-amino-acid chain; its full sequence is 3-phosphoshikimate 1-carboxyvinyltransferase (431 aa).

3-phosphoshikimate-binding residues include K21, S22, and R26. K21 is a phosphoenolpyruvate binding site. Phosphoenolpyruvate contacts are provided by G93 and R121. 3-phosphoshikimate contacts are provided by S166, Q168, D318, and K345. Phosphoenolpyruvate is bound at residue Q168. The active-site Proton acceptor is the D318. Residues R349 and R391 each contribute to the phosphoenolpyruvate site.

Belongs to the EPSP synthase family. As to quaternary structure, monomer.

Its subcellular location is the cytoplasm. It carries out the reaction 3-phosphoshikimate + phosphoenolpyruvate = 5-O-(1-carboxyvinyl)-3-phosphoshikimate + phosphate. Its pathway is metabolic intermediate biosynthesis; chorismate biosynthesis; chorismate from D-erythrose 4-phosphate and phosphoenolpyruvate: step 6/7. In terms of biological role, catalyzes the transfer of the enolpyruvyl moiety of phosphoenolpyruvate (PEP) to the 5-hydroxyl of shikimate-3-phosphate (S3P) to produce enolpyruvyl shikimate-3-phosphate and inorganic phosphate. The protein is 3-phosphoshikimate 1-carboxyvinyltransferase of Sulfurihydrogenibium sp. (strain YO3AOP1).